The chain runs to 299 residues: ATP phosphoribosyltransferase (299 aa).

Belongs to the ATP phosphoribosyltransferase family. Long subfamily. As to quaternary structure, equilibrium between an active dimeric form, an inactive hexameric form and higher aggregates. Interconversion between the various forms is largely reversible and is influenced by the natural substrates and inhibitors of the enzyme. Requires Mg(2+) as cofactor.

The protein resides in the cytoplasm. The catalysed reaction is 1-(5-phospho-beta-D-ribosyl)-ATP + diphosphate = 5-phospho-alpha-D-ribose 1-diphosphate + ATP. The protein operates within amino-acid biosynthesis; L-histidine biosynthesis; L-histidine from 5-phospho-alpha-D-ribose 1-diphosphate: step 1/9. With respect to regulation, feedback inhibited by histidine. Functionally, catalyzes the condensation of ATP and 5-phosphoribose 1-diphosphate to form N'-(5'-phosphoribosyl)-ATP (PR-ATP). Has a crucial role in the pathway because the rate of histidine biosynthesis seems to be controlled primarily by regulation of HisG enzymatic activity. The protein is ATP phosphoribosyltransferase of Proteus mirabilis (strain HI4320).